A 58-amino-acid polypeptide reads, in one-letter code: Photosystem II reaction center protein K (58 aa).

The propeptide occupies 1–21 (MFDLYLKNLLDLSDSGTVVLA). The chain crosses the membrane as a helical span at residues 29-49 (IFDPIVDVLPVIPVFFLLLAF).

Belongs to the PsbK family. In terms of assembly, PSII is composed of 1 copy each of membrane proteins PsbA, PsbB, PsbC, PsbD, PsbE, PsbF, PsbH, PsbI, PsbJ, PsbK, PsbL, PsbM, PsbT, PsbX, PsbY, PsbZ, Psb30/Ycf12, at least 3 peripheral proteins of the oxygen-evolving complex and a large number of cofactors. It forms dimeric complexes.

Its subcellular location is the plastid. It is found in the chloroplast thylakoid membrane. Functionally, one of the components of the core complex of photosystem II (PSII). PSII is a light-driven water:plastoquinone oxidoreductase that uses light energy to abstract electrons from H(2)O, generating O(2) and a proton gradient subsequently used for ATP formation. It consists of a core antenna complex that captures photons, and an electron transfer chain that converts photonic excitation into a charge separation. This is Photosystem II reaction center protein K from Zygnema circumcarinatum (Green alga).